Here is a 309-residue protein sequence, read N- to C-terminus: MDEKLFTKELDQWIEQLNECKQLSESQVKSLCEKAKEILTKESNVQEVRCPVTVCGDVHGQFHDLMELFRIGGKSPDTNYLFMGDYVDRGYYSVETVTLLVALKVRYRERITILRGNHESRQITQVYGFYDECLRKYGNANVWKYFTDLFDYLPLTALVDGQIFCLHGGLSPSIDTLDHIRALDRLQEVPHEGPMCDLLWSDPDDRGGWGISPRGAGYTFGQDISETFNHANGLTLVSRAHQLVMEGYNWCHDRNVVTIFSAPNYCYRCGNQAAIMELDDTLKYSFLQFDPAPRRGEPHVTRRTPDYFL.

Positions 57, 59, 85, and 117 each coordinate Mn(2+). Zn(2+) is bound by residues Asp-57, His-59, and Asp-85. Fe(3+) contacts are provided by Asp-85 and Asn-117. The active-site Proton donor is His-118. Mn(2+) is bound by residues His-167 and His-241. Residues His-167 and His-241 each coordinate Fe(3+). Tyr-307 bears the Phosphotyrosine mark. Residue Leu-309 is modified to Leucine methyl ester.

This sequence belongs to the PPP phosphatase family. PP-1 subfamily. As to quaternary structure, PP2A consists of a common heterodimeric core enzyme composed of PPP2CA, a 36 kDa catalytic subunit (subunit C), and PPP2R1A, a 65 kDa constant regulatory subunit (PR65 or subunit A), that associates with a variety of regulatory subunits. Proteins that associate with the core dimer include three families of regulatory subunits B (the R2/B/PR55/B55, R3/B''/PR72/PR130/PR59 and R5/B'/B56 families), the 48 kDa variable regulatory subunit, viral proteins, and cell signaling molecules. Interacts with the PP2A A subunit PPP2R1A. Interacts with the regulatory subunit PPP2R2A. Interacts (via C-terminus) with PTPA. Interacts with NXN; the interaction is direct. Interacts with KCTD20. Interacts with BTBD10. Interacts with SGO1 and SGO2. Interacts with RAF1. Interaction with IGBP1 protects unassembled PPP2CA from degradative ubiquitination. Interacts with GSK3B (via C2 domain). Interacts with MFHAS1; retains PPP2CA into the cytoplasm and excludes it from the nucleus. Interacts with PABIR1/FAM122A. Interacts with ADCY8; interaction is phosphatase activity-dependent; antagonizes interaction between ADCY8 and calmodulin. Interacts with CRTC3 (when phosphorylated at 'Ser-391'). Interacts with SPRY2; the interaction is inhibited by TESK1 interaction with SPRY2, possibly by vesicular sequestration of SPRY2. Interacts with TRAF3IP3. Interacts with AMBRA1 (via PxP motifs); enhancing interaction between PPP2CA and MYC or FOXO3. Forms a complex with AMBRA1 and BECN1; AMBRA1 and BECN1 components of the complex regulate MYC stability via different pathways. Part of the core of STRIPAK complexes composed of PP2A catalytic and scaffolding subunits, the striatins (PP2A regulatory subunits), the striatin-associated proteins MOB4, STRIP1 and STRIP2, PDCD10 and members of the STE20 kinases, such as STK24 and STK26. Phosphatase component of the Integrator-PP2A (INTAC) complex, composed of the Integrator core complex and protein phosphatase 2A subunits PPP2CA and PPP2R1A. The cofactor is Mn(2+). Requires Fe(3+) as cofactor. It depends on Zn(2+) as a cofactor. Post-translationally, reversibly methyl esterified on Leu-309 by leucine carboxyl methyltransferase 1 (Lcmt1) and protein phosphatase methylesterase 1 (Ppme1). Carboxyl methylation influences the affinity of the catalytic subunit for the different regulatory subunits, thereby modulating the PP2A holoenzyme's substrate specificity, enzyme activity and cellular localization. Phosphorylation of either threonine (by autophosphorylation-activated protein kinase) or tyrosine results in inactivation of the phosphatase. Auto-dephosphorylation has been suggested as a mechanism for reactivation. In terms of processing, polyubiquitinated, leading to its degradation by the proteasome.

It is found in the cytoplasm. It localises to the nucleus. Its subcellular location is the chromosome. The protein resides in the centromere. The protein localises to the cytoskeleton. It is found in the spindle pole. It carries out the reaction O-phospho-L-seryl-[protein] + H2O = L-seryl-[protein] + phosphate. It catalyses the reaction O-phospho-L-threonyl-[protein] + H2O = L-threonyl-[protein] + phosphate. Inhibited by the interaction between PPP2R2A and ARPP19; this inhibition is enhanced when ARPP19 is phosphorylated. Inhibited by the interaction between PPP2R2A and PABIR1/FAM122A. In terms of biological role, catalytic subunit of protein phosphatase 2A (PP2A), a serine/threonine phosphatase involved in the regulation of a wide variety of enzymes, signal transduction pathways, and cellular events. PP2A is the major phosphatase for microtubule-associated proteins (MAPs). PP2A can modulate the activity of phosphorylase B kinase casein kinase 2, mitogen-stimulated S6 kinase, and MAP-2 kinase. Cooperates with SGO2 to protect centromeric cohesin from separase-mediated cleavage in oocytes specifically during meiosis I. Can dephosphorylate various proteins, such as AXIN1, p53/TP53, PIM3, WEE1. Activates RAF1 by dephosphorylating it at 'Ser-259'. Mediates dephosphorylation of WEE1, preventing its ubiquitin-mediated proteolysis, increasing WEE1 protein levels, and promoting the G2/M checkpoint. Mediates dephosphorylation of MYC; promoting its ubiquitin-mediated proteolysis: interaction with AMBRA1 enhances interaction between PPP2CA and MYC. Mediates dephosphorylation of FOXO3; promoting its stabilization: interaction with AMBRA1 enhances interaction between PPP2CA and FOXO3. Catalyzes dephosphorylation of the pyrin domain of NLRP3, promoting assembly of the NLRP3 inflammasome. Together with RACK1 adapter, mediates dephosphorylation of AKT1 at 'Ser-473', preventing AKT1 activation and AKT-mTOR signaling pathway. Dephosphorylation of AKT1 is essential for regulatory T-cells (Treg) homeostasis and stability. Catalyzes dephosphorylation of PIM3, promotinh PIM3 ubiquitination and proteasomal degradation. Part of the striatin-interacting phosphatase and kinase (STRIPAK) complexes. STRIPAK complexes have critical roles in protein (de)phosphorylation and are regulators of multiple signaling pathways including Hippo, MAPK, nuclear receptor and cytoskeleton remodeling. Different types of STRIPAK complexes are involved in a variety of biological processes such as cell growth, differentiation, apoptosis, metabolism and immune regulation. Key mediator of a quality checkpoint during transcription elongation as part of the Integrator-PP2A (INTAC) complex. The INTAC complex drives premature transcription termination of transcripts that are unfavorably configured for transcriptional elongation: within the INTAC complex, PPP2CA catalyzes dephosphorylation of the C-terminal domain (CTD) of Pol II subunit POLR2A/RPB1 and SUPT5H/SPT5, thereby preventing transcriptional elongation. This Rattus norvegicus (Rat) protein is Serine/threonine-protein phosphatase 2A catalytic subunit alpha isoform (Ppp2ca).